We begin with the raw amino-acid sequence, 368 residues long: F-box/kelch-repeat protein At5g51250 (368 aa).

The F-box domain maps to 1–44; that stretch reads MSSLPDDLLLSIFARISRLYYPTLSLVSKSFRSLLASPDLYKAR. Kelch repeat units follow at residues 116-163, 165-218, and 260-304; these read DIYN…VLDR, IYVA…CIDG, and LFYI…YGGK.

In Arabidopsis thaliana (Mouse-ear cress), this protein is F-box/kelch-repeat protein At5g51250.